We begin with the raw amino-acid sequence, 220 residues long: 7-cyano-7-deazaguanine synthase (220 aa).

10-20 (FSGGQDSTTCL) contacts ATP. The Zn(2+) site is built by Cys186, Cys195, Cys198, and Cys201.

It belongs to the QueC family. As to quaternary structure, homodimer. Zn(2+) is required as a cofactor.

It catalyses the reaction 7-carboxy-7-deazaguanine + NH4(+) + ATP = 7-cyano-7-deazaguanine + ADP + phosphate + H2O + H(+). It functions in the pathway purine metabolism; 7-cyano-7-deazaguanine biosynthesis. Functionally, catalyzes the ATP-dependent conversion of 7-carboxy-7-deazaguanine (CDG) to 7-cyano-7-deazaguanine (preQ(0)). The sequence is that of 7-cyano-7-deazaguanine synthase from Bacillus cereus (strain ATCC 14579 / DSM 31 / CCUG 7414 / JCM 2152 / NBRC 15305 / NCIMB 9373 / NCTC 2599 / NRRL B-3711).